Here is a 228-residue protein sequence, read N- to C-terminus: CD9 antigen (228 aa).

Residues P2 to Y12 lie on the Cytoplasmic side of the membrane. C9 is lipidated: S-palmitoyl cysteine. The helical transmembrane segment at L13–L33 threads the bilayer. Topologically, residues W34–S55 are extracellular. N-linked (GlcNAc...) asparagine glycosylation is found at N52 and N53. The chain crosses the membrane as a helical span at residues F56–L76. Topologically, residues G77–C87 are cytoplasmic. S-palmitoyl cysteine attachment occurs at residues C78, C79, and C87. A helical membrane pass occupies residues M88–Y111. Residues S112–I195 lie on the Extracellular side of the membrane. 2 disulfide bridges follow: C152/C181 and C153/C167. The helical transmembrane segment at I196 to I221 threads the bilayer. S-palmitoyl cysteine attachment occurs at residues C218 and C219. Residues R222 to V228 are Cytoplasmic-facing.

Belongs to the tetraspanin (TM4SF) family. As to quaternary structure, forms both disulfide-linked homodimers and higher homooligomers as well as heterooligomers with other members of the tetraspanin family. Interacts (via the second extracellular domain) with integrin ITGAV:ITGB3. Interacts with integrin ITGA6:ITGB1; interaction takes place in oocytes and is involved in sperm-egg fusion. Part of integrin-tetraspanin complexes composed of CD81, beta-1 and beta-2 integrins in the membrane of monocyte/macrophages. Interacts with CD63; identified in a complex with CD63 and ITGB3. Associates with CR2/CD21 and with PTGFRN/CD9P1. Part of a complex composed of CD9, CD81, PTGFRN and IGSF8. Interacts directly with IGSF8. Interacts with PDPN; this interaction is homophilic and attenuates platelet aggregation and pulmonary metastasis induced by PDPN. Interacts (on T cell side) with CD81 at immunological synapses between antigen-presenting cells and T cells. In terms of processing, palmitoylated at a low, basal level in unstimulated platelets. The level of palmitoylation increases when platelets are activated by thrombin (in vitro). The protein exists in three forms with molecular masses between 22 and 27 kDa, and is known to carry covalently linked fatty acids. Palmitoylation by ZDHHC2 regulates CD9 expression, association with other tetraspanin family proteins and function in cell adhesion. As to expression, detected in platelets (at protein level). Expressed by a variety of hematopoietic and epithelial cells.

It is found in the cell membrane. The protein resides in the membrane. Its subcellular location is the secreted. The protein localises to the extracellular exosome. Its function is as follows. Integral membrane protein associated with integrins, which regulates different processes, such as sperm-egg fusion, platelet activation and aggregation, and cell adhesion. Present at the cell surface of oocytes and plays a key role in sperm-egg fusion, possibly by organizing multiprotein complexes and the morphology of the membrane required for the fusion. In myoblasts, associates with CD81 and PTGFRN and inhibits myotube fusion during muscle regeneration. In macrophages, associates with CD81 and beta-1 and beta-2 integrins, and prevents macrophage fusion into multinucleated giant cells specialized in ingesting complement-opsonized large particles. Also prevents the fusion between mononuclear cell progenitors into osteoclasts in charge of bone resorption. Acts as a receptor for PSG17. Involved in platelet activation and aggregation. Regulates paranodal junction formation. Involved in cell adhesion, cell motility and tumor metastasis. This Homo sapiens (Human) protein is CD9 antigen.